We begin with the raw amino-acid sequence, 152 residues long: FMN reductase (NADH) RutF (152 aa).

It belongs to the non-flavoprotein flavin reductase family. RutF subfamily.

It catalyses the reaction FMNH2 + NAD(+) = FMN + NADH + 2 H(+). Its function is as follows. Catalyzes the reduction of FMN to FMNH2 which is used to reduce pyrimidine by RutA via the Rut pathway. The polypeptide is FMN reductase (NADH) RutF (Shigella sonnei (strain Ss046)).